Consider the following 248-residue polypeptide: 1-(5-phosphoribosyl)-5-[(5-phosphoribosylamino)methylideneamino] imidazole-4-carboxamide isomerase (248 aa).

The active-site Proton acceptor is Asp8. The Proton donor role is filled by Asp131.

The protein belongs to the HisA/HisF family.

The protein localises to the cytoplasm. The catalysed reaction is 1-(5-phospho-beta-D-ribosyl)-5-[(5-phospho-beta-D-ribosylamino)methylideneamino]imidazole-4-carboxamide = 5-[(5-phospho-1-deoxy-D-ribulos-1-ylimino)methylamino]-1-(5-phospho-beta-D-ribosyl)imidazole-4-carboxamide. It participates in amino-acid biosynthesis; L-histidine biosynthesis; L-histidine from 5-phospho-alpha-D-ribose 1-diphosphate: step 4/9. This Cupriavidus pinatubonensis (strain JMP 134 / LMG 1197) (Cupriavidus necator (strain JMP 134)) protein is 1-(5-phosphoribosyl)-5-[(5-phosphoribosylamino)methylideneamino] imidazole-4-carboxamide isomerase.